The chain runs to 60 residues: Large ribosomal subunit protein bL32 (60 aa).

The protein belongs to the bacterial ribosomal protein bL32 family.

The sequence is that of Large ribosomal subunit protein bL32 from Streptococcus sanguinis (strain SK36).